A 406-amino-acid chain; its full sequence is Biofilm regulatory protein A (406 aa).

Residues 1–26 form the signal peptide; it reads MKIGKKILIMLVTIFLTSLVALGVYA. Residues 347–397 are compositionally biased toward low complexity; that stretch reads SSSASDYSSSGNYSGSSSDYGSSSSYGSNSSSGSSSDYSGQNSYNQGNYQQ. The disordered stretch occupies residues 347-406; sequence SSSASDYSSSGNYSGSSSDYGSSSSYGSNSSSGSSSDYSGQNSYNQGNYQQPAAGTGIGN.

This sequence belongs to the LytR/CpsA/Psr (LCP) family.

It localises to the cell envelope. Involved in biofilm formation, cell division, autolysis and the regulation of acid and oxidative stress tolerance. May be associated with systemic virulence in blood. The sequence is that of Biofilm regulatory protein A (brpA) from Streptococcus mutans serotype c (strain ATCC 700610 / UA159).